The chain runs to 550 residues: Chaperonin GroEL (550 aa).

Residues 30 to 33 (TLGP), K51, 87 to 91 (DGTTT), G415, 478 to 480 (NAA), and D494 contribute to the ATP site.

Belongs to the chaperonin (HSP60) family. Forms a cylinder of 14 subunits composed of two heptameric rings stacked back-to-back. Interacts with the co-chaperonin GroES.

Its subcellular location is the cytoplasm. It catalyses the reaction ATP + H2O + a folded polypeptide = ADP + phosphate + an unfolded polypeptide.. Together with its co-chaperonin GroES, plays an essential role in assisting protein folding. The GroEL-GroES system forms a nano-cage that allows encapsulation of the non-native substrate proteins and provides a physical environment optimized to promote and accelerate protein folding. The protein is Chaperonin GroEL of Desulfosudis oleivorans (strain DSM 6200 / JCM 39069 / Hxd3) (Desulfococcus oleovorans).